Here is a 181-residue protein sequence, read N- to C-terminus: Inorganic pyrophosphatase (181 aa).

Residues Lys-16, Arg-30, and Tyr-42 each contribute to the substrate site. Asp-52, Asp-57, and Asp-89 together coordinate Mg(2+). Residue Tyr-126 coordinates substrate.

It belongs to the PPase family. As to quaternary structure, homohexamer. The cofactor is Mg(2+).

It localises to the cytoplasm. It catalyses the reaction diphosphate + H2O = 2 phosphate + H(+). Catalyzes the hydrolysis of inorganic pyrophosphate (PPi) forming two phosphate ions. The protein is Inorganic pyrophosphatase of Malacoplasma penetrans (strain HF-2) (Mycoplasma penetrans).